A 504-amino-acid chain; its full sequence is uncharacterized protein (504 aa).

A run of 3 helical transmembrane segments spans residues 146–166 (TSAG…INIA), 196–216 (SSAA…ADVL), and 330–350 (SMAL…VAVA). An a nucleoside 3',5'-cyclic phosphate-binding site is contributed by 372 to 492 (FLNIDVPLQA…EIAYGVARTR (121 aa)).

The protein localises to the cell membrane. This is an uncharacterized protein from Mycobacterium tuberculosis (strain CDC 1551 / Oshkosh).